A 270-amino-acid polypeptide reads, in one-letter code: uncharacterized protein (270 aa).

Disordered regions lie at residues 1 to 21 (MSTN…YEKP) and 53 to 77 (PNIL…AKLN). Basic and acidic residues predominate over residues 58-75 (SKHDGDKNKNDKKKEDAK). Residues 182-270 (EENKSREEKH…KIEDNLNTYE (89 aa)) adopt a coiled-coil conformation.

This is an uncharacterized protein from Plasmodium falciparum (isolate 3D7).